Consider the following 130-residue polypeptide: Methylglyoxal synthase (130 aa).

Residues 1–130 (MSKPRIALIA…DLARNMQDVC (130 aa)) enclose the MGS-like domain. Substrate-binding positions include His11, Lys15, 37–40 (TGTT), and 57–58 (SG). Asp63 (proton donor/acceptor) is an active-site residue. Residue His90 coordinates substrate.

Belongs to the methylglyoxal synthase family.

The catalysed reaction is dihydroxyacetone phosphate = methylglyoxal + phosphate. In terms of biological role, catalyzes the formation of methylglyoxal from dihydroxyacetone phosphate. The protein is Methylglyoxal synthase of Burkholderia cenocepacia (strain HI2424).